We begin with the raw amino-acid sequence, 567 residues long: PCNA-interacting partner (567 aa).

A disordered region spans residues 485-552; the sequence is IDLKTAEQVK…GVSRNKASKN (68 aa). Polar residues-rich tracts occupy residues 512–524 and 534–552; these read DIQSETTNGQENE and LTSSKANKQGVSRNKASKN.

Belongs to the PARI family.

It localises to the cytoplasm. The protein resides in the nucleus. Functionally, required to suppress inappropriate homologous recombination, thereby playing a central role DNA repair and in the maintenance of genomic stability. The polypeptide is PCNA-interacting partner (parpbp) (Xenopus laevis (African clawed frog)).